The sequence spans 126 residues: MPSPDKEMDKVLLIGLGGFLGAVCRFLICEHVDGQLGILSVNVLGSFMLGMIMYDAEYLSFIGPKGRLAFGTGFIGAFTTFSTFAVQSFSMAFLPALGNISANLFLTLTGVFFGRSFIKALSSREI.

A run of 4 helical transmembrane segments spans residues 11–31 (VLLI…ICEH), 36–56 (LGIL…MYDA), 69–89 (AFGT…VQSF), and 93–113 (FLPA…GVFF). Na(+) is bound by residues Gly-76 and Thr-79.

It belongs to the fluoride channel Fluc/FEX (TC 1.A.43) family.

The protein resides in the cell membrane. It carries out the reaction fluoride(in) = fluoride(out). With respect to regulation, na(+) is not transported, but it plays an essential structural role and its presence is essential for fluoride channel function. Its function is as follows. Fluoride-specific ion channel. Important for reducing fluoride concentration in the cell, thus reducing its toxicity. The chain is Fluoride-specific ion channel FluC 2 from Methanosarcina mazei (strain ATCC BAA-159 / DSM 3647 / Goe1 / Go1 / JCM 11833 / OCM 88) (Methanosarcina frisia).